We begin with the raw amino-acid sequence, 522 residues long: E3 ubiquitin-protein ligase DMA2 (522 aa).

Disordered regions lie at residues 1 to 56 (MYTP…RPAS) and 69 to 92 (QNSQ…PSNS). Low complexity predominate over residues 14–35 (APTSSMTSNSSSASNANTTSSS). Polar residues predominate over residues 36-49 (GINPRNRASGTPSN). Position 206 is a phosphoserine (Ser-206). Glycyl lysine isopeptide (Lys-Gly) (interchain with G-Cter in ubiquitin) cross-links involve residues Lys-211, Lys-256, Lys-258, Lys-288, Lys-310, Lys-333, Lys-343, Lys-346, Lys-366, Lys-406, Lys-412, and Lys-423. The 64-residue stretch at 295-358 (LVIGRYTERV…SGTFLNHQRL (64 aa)) folds into the FHA domain. An RING-type zinc finger spans residues 433–477 (CSICLCKIKPCQAIFISPCAHSWHFRCVRRLVMLSYPQFVCPNCR).

It belongs to the DMA1 family. UBC4-dependent autoubiquitination occurs at Lys-211, Lys-258, Lys-288, Lys-310, Lys-333, Lys-343, Lys-346, Lys-366, Lys-406, Lys-412 and Lys-423. UBC4-dependent autoubiquitination is responsible for DMA2 turnover. UBC13/MMS2-dependent autoubiquitination occurs at Lys-258, Lys-310, Lys-346 and Lys-366. Lys-211, Lys-256, Lys-288, Lys-310, Lys-343, Lys-258, Lys-366 and Lys-412 are also ubiquitinated in trans by DMA1 E3 ligase in association with UBC4.

It localises to the cytoplasm. It carries out the reaction S-ubiquitinyl-[E2 ubiquitin-conjugating enzyme]-L-cysteine + [acceptor protein]-L-lysine = [E2 ubiquitin-conjugating enzyme]-L-cysteine + N(6)-ubiquitinyl-[acceptor protein]-L-lysine.. In terms of biological role, E3 ubiquitin-protein ligase which functions in cell cycle retarding in conjunction with the UBC4 and UBC13/MMS2 complex, 2 E2 ubiquitin conjugating enzymes. Involved in nutritional control of the cell cycle. Required for proper spindle positioning, likely regulating septin ring deposition at the bud neck. This is E3 ubiquitin-protein ligase DMA2 (DMA2) from Saccharomyces cerevisiae (strain ATCC 204508 / S288c) (Baker's yeast).